Reading from the N-terminus, the 122-residue chain is Large ribosomal subunit protein uL22 (122 aa).

It belongs to the universal ribosomal protein uL22 family. Part of the 50S ribosomal subunit.

Functionally, this protein binds specifically to 23S rRNA; its binding is stimulated by other ribosomal proteins, e.g. L4, L17, and L20. It is important during the early stages of 50S assembly. It makes multiple contacts with different domains of the 23S rRNA in the assembled 50S subunit and ribosome. In terms of biological role, the globular domain of the protein is located near the polypeptide exit tunnel on the outside of the subunit, while an extended beta-hairpin is found that lines the wall of the exit tunnel in the center of the 70S ribosome. This Thermosynechococcus vestitus (strain NIES-2133 / IAM M-273 / BP-1) protein is Large ribosomal subunit protein uL22.